The following is an 82-amino-acid chain: Exodeoxyribonuclease 7 small subunit (82 aa).

The protein belongs to the XseB family. Heterooligomer composed of large and small subunits.

It localises to the cytoplasm. The enzyme catalyses Exonucleolytic cleavage in either 5'- to 3'- or 3'- to 5'-direction to yield nucleoside 5'-phosphates.. Bidirectionally degrades single-stranded DNA into large acid-insoluble oligonucleotides, which are then degraded further into small acid-soluble oligonucleotides. The chain is Exodeoxyribonuclease 7 small subunit from Pectobacterium atrosepticum (strain SCRI 1043 / ATCC BAA-672) (Erwinia carotovora subsp. atroseptica).